A 434-amino-acid chain; its full sequence is Enolase (434 aa).

Glutamine 165 is a (2R)-2-phosphoglycerate binding site. Glutamate 207 acts as the Proton donor in catalysis. Residues aspartate 244, glutamate 291, and aspartate 318 each contribute to the Mg(2+) site. (2R)-2-phosphoglycerate-binding residues include lysine 343, arginine 372, serine 373, and lysine 394. The active-site Proton acceptor is the lysine 343.

It belongs to the enolase family. Mg(2+) serves as cofactor.

It localises to the cytoplasm. It is found in the secreted. Its subcellular location is the cell surface. The catalysed reaction is (2R)-2-phosphoglycerate = phosphoenolpyruvate + H2O. It participates in carbohydrate degradation; glycolysis; pyruvate from D-glyceraldehyde 3-phosphate: step 4/5. In terms of biological role, catalyzes the reversible conversion of 2-phosphoglycerate (2-PG) into phosphoenolpyruvate (PEP). It is essential for the degradation of carbohydrates via glycolysis. This Staphylococcus aureus (strain USA300 / TCH1516) protein is Enolase.